The sequence spans 187 residues: Protein TIFY 11b (187 aa).

The Tify domain occupies 68–103 (ATAPAAPLTIFYGGRMVVFEDFPADKAAEVMRMASS). The Jas motif lies at 121–145 (PIMRKASLQRFFAKRKDRLAATTPY). A Nuclear localization signal motif is present at residues 123-130 (MRKASLQR). The tract at residues 139-168 (LAATTPYARPSPAETKASEPEEKKTPTSWL) is disordered. Over residues 154 to 163 (KASEPEEKKT) the composition is skewed to basic and acidic residues.

It belongs to the TIFY/JAZ family. In terms of assembly, interacts with COI1B in a coronatine-dependent manner. Coronatine is an analog of jasmonoyl isoleucine (JA-Ile). Post-translationally, ubiquitinated. Targeted for degradation by the SCF(COI1) E3 ubiquitin ligase-proteasome pathway during jasmonate signaling.

It is found in the nucleus. In terms of biological role, repressor of jasmonate responses. In Oryza sativa subsp. japonica (Rice), this protein is Protein TIFY 11b.